Reading from the N-terminus, the 618-residue chain is Matrix metalloproteinase-24 (618 aa).

An N-terminal signal peptide occupies residues 1–41 (MPRSRGGRAAPGQAARWSGWRAPGRLLPLLPALCCLAAAAG). Residues 42–128 (AGKPAGADAP…HLSRRRRNKR (87 aa)) constitute a propeptide that is removed on maturation. Residues 42–575 (AGKPAGADAP…IDDVPGSVNA (534 aa)) are Extracellular-facing. The short motif at 110 to 117 (PRCGVPDH) is the Cysteine switch element. The Zn(2+) site is built by Cys112 and His255. Residue Glu256 is part of the active site. 2 residues coordinate Zn(2+): His259 and His265. A disordered region spans residues 296–352 (QKIYGPPAEPLEPTRPLPTLPVRRIHSPSERKHERQPRPPRPPLGDRPSTPGAKPNI). A compositionally biased stretch (pro residues) spans 302-314 (PAEPLEPTRPLPT). Residues 322–332 (SPSERKHERQP) show a composition bias toward basic and acidic residues. Hemopexin repeat units follow at residues 350-398 (PNIC…WKGL), 399-444 (PARI…GSCL), 446-494 (REGI…KGIP), and 495-542 (QAPQ…WMGC). A disulfide bond links Cys353 and Cys542. Residues 576-596 (VAVVVPCTLSLCLLVLLYTIF) form a helical membrane-spanning segment. At 597-618 (QFKNKTGPQPVTYYKRPVQEWV) the chain is on the cytoplasmic side. The short motif at 616 to 618 (EWV) is the PDZ-binding element.

This sequence belongs to the peptidase M10A family. Interacts (via PDZ-binding motif) with APBA3 (via PDZ domain). Interacts with GRIP1 and GRIP2. Zn(2+) serves as cofactor. It depends on Ca(2+) as a cofactor. Post-translationally, cleaved by a furin endopeptidase in the trans-Golgi network. In terms of tissue distribution, predominantly expressed in the nervous system: while enriched in the central nervous system, expression is also detected in the peripheral nervous system, including the trigeminal ganglion. Expression is not restricted to the nervous system: it is also enriched in the thymus, with a lower level of expression present in the aorta. In brain, high expression is present in the brain parenchyma, particularly within the neocortex.

Its subcellular location is the cell membrane. It is found in the golgi apparatus. The protein resides in the trans-Golgi network membrane. It localises to the secreted. The protein localises to the extracellular space. Its subcellular location is the extracellular matrix. Its function is as follows. Metalloprotease that mediates cleavage of N-cadherin (CDH2) and acts as a regulator of neuro-immune interactions and neural stem cell quiescence. Involved in cell-cell interactions between nociceptive neurites and mast cells, possibly by mediating cleavage of CDH2, thereby acting as a mediator of peripheral thermal nociception and inflammatory hyperalgesia. Key regulator of neural stem cells quiescence by mediating cleavage of CDH2, affecting CDH2-mediated anchorage of neural stem cells to ependymocytes in the adult subependymal zone, leading to modulate their quiescence. May play a role in axonal growth. Able to activate progelatinase A. May also be a proteoglycanase involved in degradation of proteoglycans, such as dermatan sulfate and chondroitin sulfate proteoglycans. Cleaves partially fibronectin, but not collagen type I, nor laminin. This Rattus norvegicus (Rat) protein is Matrix metalloproteinase-24 (Mmp24).